The primary structure comprises 92 residues: DNA-directed RNA polymerase subunit omega (92 aa).

It belongs to the RNA polymerase subunit omega family. As to quaternary structure, the RNAP catalytic core consists of 2 alpha, 1 beta, 1 beta' and 1 omega subunit. When a sigma factor is associated with the core the holoenzyme is formed, which can initiate transcription.

The catalysed reaction is RNA(n) + a ribonucleoside 5'-triphosphate = RNA(n+1) + diphosphate. In terms of biological role, promotes RNA polymerase assembly. Latches the N- and C-terminal regions of the beta' subunit thereby facilitating its interaction with the beta and alpha subunits. This Corynebacterium diphtheriae (strain ATCC 700971 / NCTC 13129 / Biotype gravis) protein is DNA-directed RNA polymerase subunit omega.